The sequence spans 250 residues: Mediator of RNA polymerase II transcription subunit 6 (250 aa).

The segment at 166 to 250 (KKREEEKKED…EPTARTTSKQ (85 aa)) is disordered. Residues 204–223 (PAEDALEREEKEEVEEEEEE) show a composition bias toward acidic residues. Over residues 224–239 (TLKTEEPTTSTDEPKF) the composition is skewed to basic and acidic residues.

This sequence belongs to the Mediator complex subunit 6 family. Component of the Mediator complex. Interacts with let-19/mdt-13. Interacts with RNA polymerase II. Interacts with mdt-28.

The protein resides in the nucleus. Functionally, component of the Mediator complex, a coactivator involved in the regulated transcription of nearly all RNA polymerase II-dependent genes. Mediator functions as a bridge to convey information from gene-specific regulatory proteins to the basal RNA polymerase II transcription machinery. Mediator is recruited to promoters by direct interactions with regulatory proteins and serves as a scaffold for the assembly of a functional preinitiation complex with RNA polymerase II and the general transcription factors. Acts to repress beta-catenin target genes. Required for asymmetric division of T-cells and for gonad and germ cell development. This is Mediator of RNA polymerase II transcription subunit 6 (mdt-6) from Caenorhabditis elegans.